A 621-amino-acid polypeptide reads, in one-letter code: 1-deoxy-D-xylulose-5-phosphate synthase (621 aa).

Thiamine diphosphate is bound by residues histidine 80 and 121-123; that span reads GHS. A Mg(2+)-binding site is contributed by aspartate 152. Thiamine diphosphate is bound by residues 153–154, asparagine 181, tyrosine 288, and glutamate 370; that span reads GA. Asparagine 181 serves as a coordination point for Mg(2+).

This sequence belongs to the transketolase family. DXPS subfamily. Homodimer. Mg(2+) serves as cofactor. Requires thiamine diphosphate as cofactor.

The enzyme catalyses D-glyceraldehyde 3-phosphate + pyruvate + H(+) = 1-deoxy-D-xylulose 5-phosphate + CO2. Its pathway is metabolic intermediate biosynthesis; 1-deoxy-D-xylulose 5-phosphate biosynthesis; 1-deoxy-D-xylulose 5-phosphate from D-glyceraldehyde 3-phosphate and pyruvate: step 1/1. Catalyzes the acyloin condensation reaction between C atoms 2 and 3 of pyruvate and glyceraldehyde 3-phosphate to yield 1-deoxy-D-xylulose-5-phosphate (DXP). This is 1-deoxy-D-xylulose-5-phosphate synthase from Edwardsiella ictaluri (strain 93-146).